Reading from the N-terminus, the 64-residue chain is Prokaryotic ubiquitin-like protein Pup (64 aa).

The interval 1-35 (MAQGGQVSAGGGRRDDDEPIEQTSGAGTQQVNVTG) is disordered. Residues 21 to 33 (EQTSGAGTQQVNV) are compositionally biased toward polar residues. Residues 21–58 (EQTSGAGTQQVNVTGTDDLLDEIDGLLENNAEEFVRSY) form an ARC ATPase binding region. Q64 carries the post-translational modification Deamidated glutamine. Residue Q64 forms an Isoglutamyl lysine isopeptide (Gln-Lys) (interchain with K-? in acceptor proteins) linkage.

Belongs to the prokaryotic ubiquitin-like protein family. As to quaternary structure, strongly interacts with the proteasome-associated ATPase ARC through a hydrophobic interface; the interacting region of Pup lies in its C-terminal half. There is one Pup binding site per ARC hexamer ring. In terms of processing, is modified by deamidation of its C-terminal glutamine to glutamate by the deamidase Dop, a prerequisite to the subsequent pupylation process.

The protein operates within protein degradation; proteasomal Pup-dependent pathway. Its function is as follows. Protein modifier that is covalently attached to lysine residues of substrate proteins, thereby targeting them for proteasomal degradation. The tagging system is termed pupylation. The polypeptide is Prokaryotic ubiquitin-like protein Pup (Corynebacterium jeikeium (strain K411)).